Here is a 259-residue protein sequence, read N- to C-terminus: Indole-3-glycerol phosphate synthase (259 aa).

The protein belongs to the TrpC family.

It carries out the reaction 1-(2-carboxyphenylamino)-1-deoxy-D-ribulose 5-phosphate + H(+) = (1S,2R)-1-C-(indol-3-yl)glycerol 3-phosphate + CO2 + H2O. Its pathway is amino-acid biosynthesis; L-tryptophan biosynthesis; L-tryptophan from chorismate: step 4/5. The protein is Indole-3-glycerol phosphate synthase of Dehalococcoides mccartyi (strain ATCC BAA-2266 / KCTC 15142 / 195) (Dehalococcoides ethenogenes (strain 195)).